The sequence spans 944 residues: Lactoferrin-binding protein A (944 aa).

An N-terminal signal peptide occupies residues 1–27; the sequence is MNKKHGFSLTLTALAIAAAFPSYAANP. The TBDR plug domain occupies 52 to 178; it reads RRSKEATGLG…LGGAVAFRTK (127 aa). The TBDR beta-barrel domain occupies 189-944; the sequence is SWGIQAKTAY…NFSLALEMKF (756 aa). The TonB C-terminal box motif lies at 927–944; sequence GRYAAPGRNFSLALEMKF.

It belongs to the TonB-dependent receptor family.

Its subcellular location is the cell outer membrane. In terms of biological role, unknown. May be an iron-siderophore receptor. In Neisseria meningitidis serogroup A / serotype 4A (strain DSM 15465 / Z2491), this protein is Lactoferrin-binding protein A (lbpA).